Reading from the N-terminus, the 327-residue chain is Methionyl-tRNA formyltransferase (327 aa).

A (6S)-5,6,7,8-tetrahydrofolate-binding site is contributed by 111 to 114; it reads SLLP.

This sequence belongs to the Fmt family.

The catalysed reaction is L-methionyl-tRNA(fMet) + (6R)-10-formyltetrahydrofolate = N-formyl-L-methionyl-tRNA(fMet) + (6S)-5,6,7,8-tetrahydrofolate + H(+). Its function is as follows. Attaches a formyl group to the free amino group of methionyl-tRNA(fMet). The formyl group appears to play a dual role in the initiator identity of N-formylmethionyl-tRNA by promoting its recognition by IF2 and preventing the misappropriation of this tRNA by the elongation apparatus. In Synechococcus elongatus (strain ATCC 33912 / PCC 7942 / FACHB-805) (Anacystis nidulans R2), this protein is Methionyl-tRNA formyltransferase.